Here is a 353-residue protein sequence, read N- to C-terminus: Ribosomal RNA small subunit methyltransferase C (353 aa).

This sequence belongs to the methyltransferase superfamily. RsmC family. As to quaternary structure, monomer.

Its subcellular location is the cytoplasm. The enzyme catalyses guanosine(1207) in 16S rRNA + S-adenosyl-L-methionine = N(2)-methylguanosine(1207) in 16S rRNA + S-adenosyl-L-homocysteine + H(+). Functionally, specifically methylates the guanine in position 1207 of 16S rRNA in the 30S particle. This chain is Ribosomal RNA small subunit methyltransferase C, found in Marinomonas sp. (strain MWYL1).